Reading from the N-terminus, the 305-residue chain is MELIFLGTSAGVPTRTRNVTAILLNLQHPTQSGLWLFDCGEGTQHQLLHTAFNPGKLDKIFISHLHGDHLFGLPGLLCSRSMSGIIQPLTIYGPHGIREFVETALRISGSWTDYPLEIVEIGAGEIFDDGLRKVTAYPMEHPLECYGYRIEEHDKPGALNAQALKAAGVPPGPLFQELKAGKTIMLDDGRQINGADYLAAPVPGKALAIFGDTGPCDAALELAKGVDVMVHEATLDMAMEAKANSRGHSSTRQAAALAREAGVGKLIITHVSSRYDDKGCQHLLRECRSIFPATELANDFAVFSI.

The Zn(2+) site is built by histidine 64, histidine 66, aspartate 68, histidine 69, histidine 141, aspartate 212, and histidine 270. Residue aspartate 68 is the Proton acceptor of the active site.

This sequence belongs to the RNase Z family. RNase BN subfamily. In terms of assembly, homodimer. It depends on Zn(2+) as a cofactor.

In terms of biological role, zinc phosphodiesterase, which has both exoribonuclease and endoribonuclease activities. This is Ribonuclease BN from Escherichia coli O81 (strain ED1a).